Consider the following 146-residue polypeptide: Hemoglobin subunit beta (146 aa).

Residue valine 1 is modified to N-acetylvaline. Positions 2-146 constitute a Globin domain; it reads HLSGGEKSAV…VAHALGHKYH (145 aa). Position 12 is a phosphothreonine (threonine 12). Lysine 59 is subject to N6-acetyllysine. Heme b is bound at residue histidine 63. Lysine 82 is modified (N6-acetyllysine). Residue histidine 92 participates in heme b binding. Cysteine 93 carries the S-nitrosocysteine modification. Lysine 144 carries the N6-acetyllysine modification.

It belongs to the globin family. Heterotetramer of two alpha chains and two beta chains. As to expression, red blood cells.

Its function is as follows. Involved in oxygen transport from the lung to the various peripheral tissues. This Ornithorhynchus anatinus (Duckbill platypus) protein is Hemoglobin subunit beta (HBB).